Consider the following 101-residue polypeptide: Small ribosomal subunit protein uS14 (101 aa).

This sequence belongs to the universal ribosomal protein uS14 family. As to quaternary structure, part of the 30S ribosomal subunit. Contacts proteins S3 and S10.

Binds 16S rRNA, required for the assembly of 30S particles and may also be responsible for determining the conformation of the 16S rRNA at the A site. The sequence is that of Small ribosomal subunit protein uS14 from Methylorubrum extorquens (strain PA1) (Methylobacterium extorquens).